A 185-amino-acid chain; its full sequence is Ribosome-recycling factor (185 aa).

The protein belongs to the RRF family.

It is found in the cytoplasm. Responsible for the release of ribosomes from messenger RNA at the termination of protein biosynthesis. May increase the efficiency of translation by recycling ribosomes from one round of translation to another. The sequence is that of Ribosome-recycling factor from Helicobacter hepaticus (strain ATCC 51449 / 3B1).